Reading from the N-terminus, the 330-residue chain is MKIAIIGAGAWGTAIAMLLARNNYRVTLYTRHSAHTQEINQLHTNKKYLPNIILPNIIKATSNFSDIVDHEIIIIVTPSDQVRATIENLKQHSISNNAIIGIASKGLDHNQSKLLSDVVKDYLANNPLFIIAGPNLANEVAQGLPCALTIAAIQKEVQFNISTLFHSTNVITSTTEDIITIQVASAFKNIIAIIAGIIIAKQYGQNCKASIITQGIKEIVAFARAAGSTNPDISQFGVIGDLILTSYAITSRNTKFGYDLGQHEYYTNLINNTNPNLIEGIKAAKILYPLTVKQNLNCHIIDCAYSILHNGSKISYAIECMLKKINHETK.

Positions 11, 31, 32, and 105 each coordinate NADPH. Sn-glycerol 3-phosphate-binding residues include lysine 105 and glycine 133. Position 137 (alanine 137) interacts with NADPH. Sn-glycerol 3-phosphate contacts are provided by lysine 188, aspartate 241, serine 251, arginine 252, and asparagine 253. Residue lysine 188 is the Proton acceptor of the active site. Arginine 252 is an NADPH binding site. Residues leucine 277 and glutamate 279 each coordinate NADPH.

This sequence belongs to the NAD-dependent glycerol-3-phosphate dehydrogenase family.

The protein resides in the cytoplasm. It catalyses the reaction sn-glycerol 3-phosphate + NAD(+) = dihydroxyacetone phosphate + NADH + H(+). The enzyme catalyses sn-glycerol 3-phosphate + NADP(+) = dihydroxyacetone phosphate + NADPH + H(+). The protein operates within membrane lipid metabolism; glycerophospholipid metabolism. Catalyzes the reduction of the glycolytic intermediate dihydroxyacetone phosphate (DHAP) to sn-glycerol 3-phosphate (G3P), the key precursor for phospholipid synthesis. This is Glycerol-3-phosphate dehydrogenase [NAD(P)+] from Orientia tsutsugamushi (strain Boryong) (Rickettsia tsutsugamushi).